A 575-amino-acid chain; its full sequence is Isocitrate dehydrogenase kinase/phosphatase (575 aa).

ATP contacts are provided by residues A316–L322 and K337. The active site involves D372.

Belongs to the AceK family.

The protein localises to the cytoplasm. The catalysed reaction is L-seryl-[isocitrate dehydrogenase] + ATP = O-phospho-L-seryl-[isocitrate dehydrogenase] + ADP + H(+). Functionally, bifunctional enzyme which can phosphorylate or dephosphorylate isocitrate dehydrogenase (IDH) on a specific serine residue. This is a regulatory mechanism which enables bacteria to bypass the Krebs cycle via the glyoxylate shunt in response to the source of carbon. When bacteria are grown on glucose, IDH is fully active and unphosphorylated, but when grown on acetate or ethanol, the activity of IDH declines drastically concomitant with its phosphorylation. This chain is Isocitrate dehydrogenase kinase/phosphatase, found in Anaeromyxobacter sp. (strain Fw109-5).